We begin with the raw amino-acid sequence, 475 residues long: ATP synthase subunit beta, chloroplastic (475 aa).

An ATP-binding site is contributed by 155-162 (GGAGVGKT).

This sequence belongs to the ATPase alpha/beta chains family. F-type ATPases have 2 components, CF(1) - the catalytic core - and CF(0) - the membrane proton channel. CF(1) has five subunits: alpha(3), beta(3), gamma(1), delta(1), epsilon(1). CF(0) has four main subunits: a(1), b(1), b'(1) and c(9-12).

It localises to the plastid. The protein resides in the chloroplast thylakoid membrane. It catalyses the reaction ATP + H2O + 4 H(+)(in) = ADP + phosphate + 5 H(+)(out). Its function is as follows. Produces ATP from ADP in the presence of a proton gradient across the membrane. The catalytic sites are hosted primarily by the beta subunits. This is ATP synthase subunit beta, chloroplastic from Ochrosphaera neapolitana.